The following is a 296-amino-acid chain: NAD kinase (296 aa).

D74 serves as the catalytic Proton acceptor. Residues 74 to 75, 148 to 149, R176, D178, and 189 to 194 each bind NAD(+); these read DG, ND, and TAYALS.

Belongs to the NAD kinase family. A divalent metal cation is required as a cofactor.

The protein localises to the cytoplasm. The enzyme catalyses NAD(+) + ATP = ADP + NADP(+) + H(+). Functionally, involved in the regulation of the intracellular balance of NAD and NADP, and is a key enzyme in the biosynthesis of NADP. Catalyzes specifically the phosphorylation on 2'-hydroxyl of the adenosine moiety of NAD to yield NADP. This chain is NAD kinase, found in Nitrosomonas eutropha (strain DSM 101675 / C91 / Nm57).